We begin with the raw amino-acid sequence, 352 residues long: Photosystem II D2 protein (352 aa).

Residues 40 to 60 traverse the membrane as a helical segment; that stretch reads CAFLSIGGWLTGTTFVTSWYT. Residue histidine 117 participates in chlorophyll a binding. The helical transmembrane segment at 124-140 threads the bilayer; it reads GFCLRQIEIARLVGIRP. The pheophytin a site is built by glutamine 129 and asparagine 142. A helical membrane pass occupies residues 152-165; it reads VFVSVFLMYPLGQS. Position 197 (histidine 197) interacts with chlorophyll a. A helical transmembrane segment spans residues 207–227; that stretch reads GALLCAIHGATVENTLFQDGE. A plastoquinone contacts are provided by histidine 214 and phenylalanine 261. Histidine 214 serves as a coordination point for Fe cation. Histidine 268 lines the Fe cation pocket. The helical transmembrane segment at 278 to 294 threads the bilayer; sequence GLWMSSIGIVGLAFNLR.

Belongs to the reaction center PufL/M/PsbA/D family. PSII is composed of 1 copy each of membrane proteins PsbA, PsbB, PsbC, PsbD, PsbE, PsbF, PsbH, PsbI, PsbJ, PsbK, PsbL, PsbM, PsbT, PsbX, PsbY, PsbZ, Psb30/Ycf12, peripheral proteins PsbO, CyanoQ (PsbQ), PsbU, PsbV and a large number of cofactors. It forms dimeric complexes. It depends on The D1/D2 heterodimer binds P680, chlorophylls that are the primary electron donor of PSII, and subsequent electron acceptors. It shares a non-heme iron and each subunit binds pheophytin, quinone, additional chlorophylls, carotenoids and lipids. There is also a Cl(-1) ion associated with D1 and D2, which is required for oxygen evolution. The PSII complex binds additional chlorophylls, carotenoids and specific lipids. as a cofactor.

The protein resides in the cellular thylakoid membrane. It carries out the reaction 2 a plastoquinone + 4 hnu + 2 H2O = 2 a plastoquinol + O2. Photosystem II (PSII) is a light-driven water:plastoquinone oxidoreductase that uses light energy to abstract electrons from H(2)O, generating O(2) and a proton gradient subsequently used for ATP formation. It consists of a core antenna complex that captures photons, and an electron transfer chain that converts photonic excitation into a charge separation. The D1/D2 (PsbA/PsbD) reaction center heterodimer binds P680, the primary electron donor of PSII as well as several subsequent electron acceptors. D2 is needed for assembly of a stable PSII complex. The polypeptide is Photosystem II D2 protein (Trichodesmium erythraeum (strain IMS101)).